The sequence spans 763 residues: Amyloid beta precursor like protein 2 (763 aa).

Positions 1–31 (MAATGTAAAAATGRLLLLLLVGLTAPALALA) are cleaved as a signal peptide. Residues 32–692 (GYIEALAANA…PLREDFSLSS (661 aa)) lie on the Extracellular side of the membrane. The interval 46–139 (AVAEPQIAMF…PFKCLVGEFV (94 aa)) is GFLD subdomain. One can recognise an E1 domain in the interval 46–205 (AVAEPQIAMF…HGTEYVCCPQ (160 aa)). 6 cysteine pairs are disulfide-bonded: Cys-56–Cys-80, Cys-91–Cys-133, Cys-116–Cys-123, Cys-149–Cys-203, Cys-160–Cys-190, and Cys-174–Cys-202. The cuBD subdomain stretch occupies residues 147–205 (EKCQFFHKERMEVCENHQHWHTVVKEACLTQGMTLYSYGMLLPCGVDQFHGTEYVCCPQ). Cu cation is bound by residues His-163, His-167, and Tyr-184. Residues 211 to 299 (SVSKEEEEED…EPGSDGTMSD (89 aa)) form a disordered region. Composition is skewed to acidic residues over residues 215–233 (EEEEEDEEEEEEEDEEEDY) and 242–269 (TEADLEDFTEAAVDEDDEDEEEGEEVVE). A compositionally biased stretch (basic and acidic residues) spans 270 to 282 (DRDYYYDTFKGDD). The region spanning 306–364 (VKAVCSQEAMTGPCRAVMPRWYFDLSKGKCVRFIYGGCGGNRNNFESEDYCMAVCKAMI) is the BPTI/Kunitz inhibitor domain. Disulfide bonds link Cys-310–Cys-360, Cys-319–Cys-343, and Cys-335–Cys-356. Positions 373–564 (DVDVYFETSA…QEIQEEIDEL (192 aa)) constitute an E2 domain. Ser-590 carries the post-translational modification Phosphoserine; by FAM20C. Ser-626 is a glycosylation site (O-linked (Xyl...) (chondroitin sulfate) serine). The chain crosses the membrane as a helical span at residues 693–716 (SALIGLLVIAVAIATVIVISLVML). The Cytoplasmic segment spans residues 717 to 763 (RKRQYGTISHGIVEVDPMLTPEERHLNKMQNHGYENPTYKYLEQMQI). The segment at 749 to 763 (GYENPTYKYLEQMQI) is interaction with DAB2. Positions 750-755 (YENPTY) match the NPXY motif motif.

The protein belongs to the APP family. Interacts with CPEB1. Interacts (via NPXY motif) with DAB2 (via PID domain); the interaction is impaired by tyrosine phosphorylation of the NPXY motif. Interacts (via cytoplasmic domain) with APBB2/FE65L. Interacts (via intracellular domain) with APBB3/FE65L2. In terms of processing, the BPTI/Kunitz inhibitor domain is O-glycosylated. Expressed in placenta, brain, heart, lung, liver, kidney and endothelial tissues.

It is found in the cell membrane. The protein localises to the nucleus. Its function is as follows. May play a role in the regulation of hemostasis. The soluble form may have inhibitory properties towards coagulation factors. May interact with cellular G-protein signaling pathways. May bind to the DNA 5'-GTCACATG-3'(CDEI box). Inhibits trypsin, chymotrypsin, plasmin, factor XIA and plasma and glandular kallikrein. Modulates the Cu/Zn nitric oxide-catalyzed autodegradation of GPC1 heparan sulfate side chains in fibroblasts. The polypeptide is Amyloid beta precursor like protein 2 (Homo sapiens (Human)).